The chain runs to 66 residues: Movement protein TGBp3 (66 aa).

The Lumenal segment spans residues 1-2 (MD). The helical transmembrane segment at 3-23 (FTTLVIIGVYLLVFIVYFAKI) threads the bilayer. The Cytoplasmic portion of the chain corresponds to 24–66 (NTSMCTISISGASVEISGCDNPALFEILPNLKPFDHGLSVPSI).

It belongs to the Tymovirales TGBp3 protein family.

It is found in the host endoplasmic reticulum membrane. Plays a role in viral cell-to-cell propagation, by facilitating genome transport to neighboring plant cells through plasmosdesmata. May induce the formation of granular vesicles derived from the Endoplasmic reticulum, which align on actin filaments. This is Movement protein TGBp3 from Trifolium (WCMV).